A 181-amino-acid chain; its full sequence is MENTQENPTTPSAEDIGSEKQAAQGAAPAAEAADAALAEAQAKVAELQESFLRAKAETENVRRRAQDDVSKAHKFAIESFAEHLLPVLDSLEAAVNDTSGDIAKVREGVELTLRQLTSALEKGRVVAINPIGEKFDPHQHQAISMVPAEQEPNTVVSVLQKGYTIADRVLRPALVTVAQPK.

Residues 1–12 (MENTQENPTTPS) show a composition bias toward polar residues. The segment at 1 to 33 (MENTQENPTTPSAEDIGSEKQAAQGAAPAAEAA) is disordered. The segment covering 21–33 (QAAQGAAPAAEAA) has biased composition (low complexity).

This sequence belongs to the GrpE family. In terms of assembly, homodimer.

It localises to the cytoplasm. Participates actively in the response to hyperosmotic and heat shock by preventing the aggregation of stress-denatured proteins, in association with DnaK and GrpE. It is the nucleotide exchange factor for DnaK and may function as a thermosensor. Unfolded proteins bind initially to DnaJ; upon interaction with the DnaJ-bound protein, DnaK hydrolyzes its bound ATP, resulting in the formation of a stable complex. GrpE releases ADP from DnaK; ATP binding to DnaK triggers the release of the substrate protein, thus completing the reaction cycle. Several rounds of ATP-dependent interactions between DnaJ, DnaK and GrpE are required for fully efficient folding. The polypeptide is Protein GrpE (Burkholderia cenocepacia (strain HI2424)).